A 457-amino-acid polypeptide reads, in one-letter code: ATP synthase subunit beta (457 aa).

Residue 147–154 (GGAGVGKT) coordinates ATP.

The protein belongs to the ATPase alpha/beta chains family. As to quaternary structure, F-type ATPases have 2 components, CF(1) - the catalytic core - and CF(0) - the membrane proton channel. CF(1) has five subunits: alpha(3), beta(3), gamma(1), delta(1), epsilon(1). CF(0) has three main subunits: a(1), b(2) and c(9-12). The alpha and beta chains form an alternating ring which encloses part of the gamma chain. CF(1) is attached to CF(0) by a central stalk formed by the gamma and epsilon chains, while a peripheral stalk is formed by the delta and b chains.

The protein resides in the cell inner membrane. The enzyme catalyses ATP + H2O + 4 H(+)(in) = ADP + phosphate + 5 H(+)(out). Functionally, produces ATP from ADP in the presence of a proton gradient across the membrane. The catalytic sites are hosted primarily by the beta subunits. The chain is ATP synthase subunit beta from Actinobacillus pleuropneumoniae serotype 5b (strain L20).